A 736-amino-acid chain; its full sequence is Phosphoribosylformylglycinamidine synthase subunit PurL (736 aa).

Residue histidine 49 is part of the active site. Residues tyrosine 52 and lysine 91 each contribute to the ATP site. Glutamate 93 is a Mg(2+) binding site. Substrate is bound by residues 94–97 (SHNH) and arginine 116. The active-site Proton acceptor is histidine 95. Aspartate 117 is a binding site for Mg(2+). Glutamine 240 contributes to the substrate binding site. Position 268 (aspartate 268) interacts with Mg(2+). 312–314 (ESQ) contributes to the substrate binding site. ATP-binding residues include aspartate 493 and glycine 530. Asparagine 531 contributes to the Mg(2+) binding site. Residue serine 533 coordinates substrate.

Belongs to the FGAMS family. As to quaternary structure, monomer. Part of the FGAM synthase complex composed of 1 PurL, 1 PurQ and 2 PurS subunits.

The protein resides in the cytoplasm. The enzyme catalyses N(2)-formyl-N(1)-(5-phospho-beta-D-ribosyl)glycinamide + L-glutamine + ATP + H2O = 2-formamido-N(1)-(5-O-phospho-beta-D-ribosyl)acetamidine + L-glutamate + ADP + phosphate + H(+). It participates in purine metabolism; IMP biosynthesis via de novo pathway; 5-amino-1-(5-phospho-D-ribosyl)imidazole from N(2)-formyl-N(1)-(5-phospho-D-ribosyl)glycinamide: step 1/2. Functionally, part of the phosphoribosylformylglycinamidine synthase complex involved in the purines biosynthetic pathway. Catalyzes the ATP-dependent conversion of formylglycinamide ribonucleotide (FGAR) and glutamine to yield formylglycinamidine ribonucleotide (FGAM) and glutamate. The FGAM synthase complex is composed of three subunits. PurQ produces an ammonia molecule by converting glutamine to glutamate. PurL transfers the ammonia molecule to FGAR to form FGAM in an ATP-dependent manner. PurS interacts with PurQ and PurL and is thought to assist in the transfer of the ammonia molecule from PurQ to PurL. This is Phosphoribosylformylglycinamidine synthase subunit PurL from Rhodopseudomonas palustris (strain TIE-1).